The sequence spans 444 residues: Methylenetetrahydrofolate--tRNA-(uracil-5-)-methyltransferase TrmFO (444 aa).

Residue 10–15 (GAGLAG) coordinates FAD.

The protein belongs to the MnmG family. TrmFO subfamily. Requires FAD as cofactor.

The protein localises to the cytoplasm. The enzyme catalyses uridine(54) in tRNA + (6R)-5,10-methylene-5,6,7,8-tetrahydrofolate + NADH + H(+) = 5-methyluridine(54) in tRNA + (6S)-5,6,7,8-tetrahydrofolate + NAD(+). It catalyses the reaction uridine(54) in tRNA + (6R)-5,10-methylene-5,6,7,8-tetrahydrofolate + NADPH + H(+) = 5-methyluridine(54) in tRNA + (6S)-5,6,7,8-tetrahydrofolate + NADP(+). Functionally, catalyzes the folate-dependent formation of 5-methyl-uridine at position 54 (M-5-U54) in all tRNAs. The polypeptide is Methylenetetrahydrofolate--tRNA-(uracil-5-)-methyltransferase TrmFO (Streptococcus pneumoniae (strain 70585)).